Here is a 314-residue protein sequence, read N- to C-terminus: tRNA dimethylallyltransferase (314 aa).

13-20 (GPTAIGKT) serves as a coordination point for ATP. Residue 15–20 (TAIGKT) coordinates substrate. The tract at residues 38–41 (DSMQ) is interaction with substrate tRNA.

The protein belongs to the IPP transferase family. In terms of assembly, monomer. It depends on Mg(2+) as a cofactor.

The catalysed reaction is adenosine(37) in tRNA + dimethylallyl diphosphate = N(6)-dimethylallyladenosine(37) in tRNA + diphosphate. Functionally, catalyzes the transfer of a dimethylallyl group onto the adenine at position 37 in tRNAs that read codons beginning with uridine, leading to the formation of N6-(dimethylallyl)adenosine (i(6)A). The chain is tRNA dimethylallyltransferase from Desulfotalea psychrophila (strain LSv54 / DSM 12343).